The sequence spans 377 residues: Pseudouridylate synthase RPUSD4, mitochondrial (377 aa).

Positions 51–70 (LRAQKQQQKTKEPAPTNPVQ) are disordered. Asp153 is a catalytic residue.

Belongs to the pseudouridine synthase RluA family. Interacts with 16S mt-rRNA, mt-tRNA(Phe) and mt-tRNA(Met). Forms a regulatory protein-RNA complex, consisting of RCC1L, NGRN, RPUSD3, RPUSD4, TRUB2, FASTKD2 and 16S mt-rRNA.

It is found in the mitochondrion matrix. It localises to the nucleus. The protein resides in the cytoplasm. It catalyses the reaction uridine in 5S rRNA = pseudouridine in 5S rRNA. The catalysed reaction is a uridine in tRNA = a pseudouridine in tRNA. The enzyme catalyses a uridine in mRNA = a pseudouridine in mRNA. Functionally, catalyzes uridine to pseudouridine isomerization (pseudouridylation) of different mitochondrial RNA substrates. Acts on position 1397 in 16S mitochondrial ribosomal RNA (16S mt-rRNA). This modification is required for the assembly of 16S mt-rRNA into a functional mitochondrial ribosome. As a component of a functional protein-RNA module, consisting of RCC1L, NGRN, RPUSD3, RPUSD4, TRUB2, FASTKD2 and 16S mt-rRNA, controls 16S mt-rRNA abundance and is required for intra-mitochondrial translation. Acts on position 39 in mitochondrial tRNA(Phe). Also catalyzes pseudouridylation of mRNAs in nucleus: acts as a regulator of pre-mRNA splicing by mediating pseudouridylation of pre-mRNAs at locations associated with alternatively spliced regions. Pseudouridylation of pre-mRNAs near splice sites directly regulates mRNA splicing and mRNA 3'-end processing. In Bos taurus (Bovine), this protein is Pseudouridylate synthase RPUSD4, mitochondrial.